A 194-amino-acid polypeptide reads, in one-letter code: Peptidyl-tRNA hydrolase (194 aa).

TRNA is bound at residue tyrosine 17. Histidine 22 (proton acceptor) is an active-site residue. TRNA-binding residues include phenylalanine 68, asparagine 70, and asparagine 116.

This sequence belongs to the PTH family. In terms of assembly, monomer.

Its subcellular location is the cytoplasm. The enzyme catalyses an N-acyl-L-alpha-aminoacyl-tRNA + H2O = an N-acyl-L-amino acid + a tRNA + H(+). Hydrolyzes ribosome-free peptidyl-tRNAs (with 1 or more amino acids incorporated), which drop off the ribosome during protein synthesis, or as a result of ribosome stalling. In terms of biological role, catalyzes the release of premature peptidyl moieties from peptidyl-tRNA molecules trapped in stalled 50S ribosomal subunits, and thus maintains levels of free tRNAs and 50S ribosomes. The chain is Peptidyl-tRNA hydrolase from Shewanella woodyi (strain ATCC 51908 / MS32).